A 353-amino-acid chain; its full sequence is Cellulose-complementing protein (353 aa).

Disordered regions lie at residues 1–21, 75–94, and 117–337; these read MSASGSDEVAGGGQAGSPQDF, PQIAVAPPPPPVVPDPPAIV, and AVPA…SPRP. Residues 80–91 show a composition bias toward pro residues; that stretch reads APPPPPVVPDPP. Composition is skewed to low complexity over residues 117–132 and 142–164; these read AVPAEPPVQEAPVQAA and IAEQAPPAAPDPASVPYANVAAA. Over residues 165-175 the composition is skewed to pro residues; the sequence is PVPPDPAPVTP. Composition is skewed to polar residues over residues 196–226 and 278–304; these read QVRTVQEGATPSRVPSRSMNAFPRTSASSIS and STRSVRSNVSRMTSMTKTDTNSSQASR.

In Komagataeibacter xylinus (Gluconacetobacter xylinus), this protein is Cellulose-complementing protein (ccpAX).